A 336-amino-acid chain; its full sequence is S-adenosylmethionine:tRNA ribosyltransferase-isomerase (336 aa).

This sequence belongs to the QueA family. In terms of assembly, monomer.

It is found in the cytoplasm. It catalyses the reaction 7-aminomethyl-7-carbaguanosine(34) in tRNA + S-adenosyl-L-methionine = epoxyqueuosine(34) in tRNA + adenine + L-methionine + 2 H(+). The protein operates within tRNA modification; tRNA-queuosine biosynthesis. Functionally, transfers and isomerizes the ribose moiety from AdoMet to the 7-aminomethyl group of 7-deazaguanine (preQ1-tRNA) to give epoxyqueuosine (oQ-tRNA). This chain is S-adenosylmethionine:tRNA ribosyltransferase-isomerase, found in Sulfurihydrogenibium sp. (strain YO3AOP1).